Consider the following 160-residue polypeptide: Large ribosomal subunit protein uL11 (160 aa).

Belongs to the universal ribosomal protein uL11 family. In terms of assembly, part of the ribosomal stalk of the 50S ribosomal subunit. Interacts with L10 and the large rRNA to form the base of the stalk. L10 forms an elongated spine to which L12 dimers bind in a sequential fashion forming a multimeric L10(L12)X complex.

Forms part of the ribosomal stalk which helps the ribosome interact with GTP-bound translation factors. This Methanothermobacter thermautotrophicus (strain ATCC 29096 / DSM 1053 / JCM 10044 / NBRC 100330 / Delta H) (Methanobacterium thermoautotrophicum) protein is Large ribosomal subunit protein uL11.